Here is a 221-residue protein sequence, read N- to C-terminus: Endo-1,4-beta-xylanase 11A (221 aa).

The first 17 residues, 1 to 17 (MVSFTTLLTAVATAVSA), serve as a signal peptide directing secretion. In terms of domain architecture, GH11 spans 28–218 (RGIQPGTGVH…SSGSAEIEVR (191 aa)). Residue N89 is glycosylated (N-linked (GlcNAc...) asparagine). The Nucleophile role is filled by E113. E205 functions as the Proton donor in the catalytic mechanism.

The protein belongs to the glycosyl hydrolase 11 (cellulase G) family.

The protein localises to the secreted. The enzyme catalyses Endohydrolysis of (1-&gt;4)-beta-D-xylosidic linkages in xylans.. Its pathway is glycan degradation; xylan degradation. Its activity is regulated as follows. Retains an activity of 52.5% in the presence of 5 mM SDS. Functionally, endo-1,4-beta-xylanase involved in the hydrolysis of xylan, a major structural heterogeneous polysaccharide found in plant biomass representing the second most abundant polysaccharide in the biosphere, after cellulose. Is an alkali-tolerant enzyme, exhibiting 50.6% of activity at pH 9.0, and 26.9% even at pH 10.0. This is Endo-1,4-beta-xylanase 11A from Humicola insolens (Soft-rot fungus).